The primary structure comprises 288 residues: Glandicoline B O-methyltransferase roqN (288 aa).

Residues threonine 57, aspartate 82, and 109 to 110 (DA) contribute to the S-adenosyl-L-methionine site.

It belongs to the class I-like SAM-binding methyltransferase superfamily.

It carries out the reaction glandicoline B + S-adenosyl-L-methionine = meleagrin + S-adenosyl-L-homocysteine + H(+). Its pathway is alkaloid biosynthesis. Functionally, glandicoline B O-methyltransferase; part of the gene cluster that mediates the biosynthesis of the mycotoxin meleagrin. The first stage is catalyzed by the dipeptide synthase roqA which condenses histidine and tryptophan to produce histidyltryptophanyldiketopiperazine (HTD). HTD is then converted to roquefortine C through two possible pathways. In the first pathway, prenyltransferase roqD transforms HTD to the intermediate roquefortine D, which is in turn converted to roquefortine C by the cytochrome P450 monooxygenase roqR. In the second pathway, HTD is first converted to the intermediate dehydrohistidyltryptophanyldi-ketopiperazine (DHTD) by roqR which is then prenylated by roqD to form roquefortine C. Roquefortine C can be further transformed to meleagrin via three more reactions including oxydation to glandicolin A by roqM, which is further reduced to glandicoline B by roqO. Finally, glandicoline B is converted to meleagrin by the glandicoline B O-methyltransferase roqN. More studies identified further branching and additional metabolites produced by the roquefortine/meleagrin cluster, including roquefortine F, roquefortine L, roquefortine M, roquefortine N and neoxaline. This is Glandicoline B O-methyltransferase roqN from Penicillium rubens (strain ATCC 28089 / DSM 1075 / NRRL 1951 / Wisconsin 54-1255) (Penicillium chrysogenum).